The sequence spans 165 residues: NADPH-dependent 7-cyano-7-deazaguanine reductase (165 aa).

Cysteine 56 acts as the Thioimide intermediate in catalysis. The Proton donor role is filled by aspartate 63. Substrate contacts are provided by residues 78 to 80 (VES) and 97 to 98 (HE).

The protein belongs to the GTP cyclohydrolase I family. QueF type 1 subfamily.

Its subcellular location is the cytoplasm. It carries out the reaction 7-aminomethyl-7-carbaguanine + 2 NADP(+) = 7-cyano-7-deazaguanine + 2 NADPH + 3 H(+). Its pathway is tRNA modification; tRNA-queuosine biosynthesis. Catalyzes the NADPH-dependent reduction of 7-cyano-7-deazaguanine (preQ0) to 7-aminomethyl-7-deazaguanine (preQ1). This Bacillus anthracis (strain A0248) protein is NADPH-dependent 7-cyano-7-deazaguanine reductase.